Reading from the N-terminus, the 433-residue chain is Glutamate-1-semialdehyde 2,1-aminomutase (433 aa).

K271 carries the post-translational modification N6-(pyridoxal phosphate)lysine.

This sequence belongs to the class-III pyridoxal-phosphate-dependent aminotransferase family. HemL subfamily. As to quaternary structure, homodimer. The cofactor is pyridoxal 5'-phosphate.

Its subcellular location is the cytoplasm. It catalyses the reaction (S)-4-amino-5-oxopentanoate = 5-aminolevulinate. Its pathway is porphyrin-containing compound metabolism; protoporphyrin-IX biosynthesis; 5-aminolevulinate from L-glutamyl-tRNA(Glu): step 2/2. It functions in the pathway porphyrin-containing compound metabolism; chlorophyll biosynthesis. The sequence is that of Glutamate-1-semialdehyde 2,1-aminomutase from Prochlorococcus marinus subsp. pastoris (strain CCMP1986 / NIES-2087 / MED4).